A 183-amino-acid chain; its full sequence is Ribosome rescue factor SmrB (183 aa).

In terms of domain architecture, Smr spans 98–173; it reads LDLHGLTQMQ…GDAALLVLIE (76 aa).

Belongs to the SmrB family. As to quaternary structure, associates with collided ribosomes, but not with correctly translating polysomes.

Functionally, acts as a ribosome collision sensor. Detects stalled/collided disomes (pairs of ribosomes where the leading ribosome is stalled and a second ribosome has collided with it) and endonucleolytically cleaves mRNA at the 5' boundary of the stalled ribosome. Stalled/collided disomes form a new interface (primarily via the 30S subunits) that binds SmrB. Cleaved mRNA becomes available for tmRNA ligation, leading to ribosomal subunit dissociation and rescue of stalled ribosomes. The polypeptide is Ribosome rescue factor SmrB (Enterobacter sp. (strain 638)).